A 429-amino-acid polypeptide reads, in one-letter code: Histidine--tRNA ligase (429 aa).

The protein belongs to the class-II aminoacyl-tRNA synthetase family. As to quaternary structure, homodimer.

It localises to the cytoplasm. It carries out the reaction tRNA(His) + L-histidine + ATP = L-histidyl-tRNA(His) + AMP + diphosphate + H(+). The protein is Histidine--tRNA ligase of Pseudomonas fluorescens (strain Pf0-1).